We begin with the raw amino-acid sequence, 64 residues long: Large ribosomal subunit protein bL33 (64 aa).

Belongs to the bacterial ribosomal protein bL33 family.

The sequence is that of Large ribosomal subunit protein bL33 from Thermosynechococcus vestitus (strain NIES-2133 / IAM M-273 / BP-1).